A 330-amino-acid polypeptide reads, in one-letter code: Protein rlx (330 aa).

The tract at residues 220–330 (LGEDYDKGGL…EKTRGFDLEL (111 aa)) is disordered. Composition is skewed to basic and acidic residues over residues 237 to 269 (NEQR…EWAR) and 279 to 330 (QNRE…DLEL).

Its function is as follows. This protein is probably required for relaxation complex formation and plasmid mobilization by conjugative plasmids. The protein is Protein rlx (rlx) of Staphylococcus aureus.